Consider the following 472-residue polypeptide: Carboxypeptidase Q (472 aa).

A signal peptide spans 1–20 (MRFLFFLFVAVVHLFSLGSG). Positions 21–44 (KAIYKSGVSQRTFQEIKEEIANYE) are excised as a propeptide. N-linked (GlcNAc...) asparagine glycosylation is present at asparagine 61. Positions 290 and 302 each coordinate Zn(2+). Glutamate 336 (nucleophile) is an active-site residue. Glutamate 337 lines the Zn(2+) pocket. The N-linked (GlcNAc...) asparagine glycan is linked to asparagine 353. Aspartate 364 serves as a coordination point for Zn(2+). Asparagine 396 carries an N-linked (GlcNAc...) asparagine glycan. Histidine 434 is a binding site for Zn(2+).

Belongs to the peptidase M28 family. As to quaternary structure, homodimer. The monomeric form is inactive while the homodimer is active. In terms of processing, N-glycosylated. The secreted form is modified by hybrid or complex type oligosaccharide chains.

Its subcellular location is the endoplasmic reticulum. It is found in the golgi apparatus. It localises to the lysosome. The protein localises to the secreted. Functionally, carboxypeptidase that may play an important role in the hydrolysis of circulating peptides. Catalyzes the hydrolysis of dipeptides with unsubstituted terminals into amino acids. May play a role in the liberation of thyroxine hormone from its thyroglobulin (Tg) precursor. The chain is Carboxypeptidase Q (Cpq) from Rattus norvegicus (Rat).